The primary structure comprises 271 residues: Phosphate import ATP-binding protein PstB 1 (271 aa).

Residues 24–266 (MIGKDVSVYY…PDDPRTQDYI (243 aa)) form the ABC transporter domain. 56-63 (GPSGCGKS) is an ATP binding site.

The protein belongs to the ABC transporter superfamily. Phosphate importer (TC 3.A.1.7) family. As to quaternary structure, the complex is composed of two ATP-binding proteins (PstB), two transmembrane proteins (PstC and PstA) and a solute-binding protein (PstS).

The protein resides in the cell inner membrane. It catalyses the reaction phosphate(out) + ATP + H2O = ADP + 2 phosphate(in) + H(+). Part of the ABC transporter complex PstSACB involved in phosphate import. Responsible for energy coupling to the transport system. The chain is Phosphate import ATP-binding protein PstB 1 from Rhizobium johnstonii (strain DSM 114642 / LMG 32736 / 3841) (Rhizobium leguminosarum bv. viciae).